A 226-amino-acid polypeptide reads, in one-letter code: Acyl-homoserine-lactone synthase (226 aa).

The protein belongs to the autoinducer synthase family.

It carries out the reaction a fatty acyl-[ACP] + S-adenosyl-L-methionine = an N-acyl-L-homoserine lactone + S-methyl-5'-thioadenosine + holo-[ACP] + H(+). Required for the synthesis of OHHL (N-(3-oxohexanoyl)-L-homoserine lactone), an autoinducer molecule. The protein is Acyl-homoserine-lactone synthase (psyI) of Pseudomonas amygdali pv. tabaci (Pseudomonas syringae pv. tabaci).